The sequence spans 177 residues: Alpha-crystallin A chain (177 aa).

Methionine 1 carries the post-translational modification N-acetylmethionine. The sHSP domain occupies valine 52 to serine 162. Zn(2+) contacts are provided by histidine 100 and glutamate 102. Cysteine 131 and cysteine 142 are oxidised to a cystine. The segment at threonine 146 to proline 177 is disordered. A glycan (O-linked (GlcNAc) serine) is linked at serine 162. Basic and acidic residues predominate over residues serine 162–proline 177.

Belongs to the small heat shock protein (HSP20) family. Heteropolymer composed of three CRYAA and one CRYAB subunits. Inter-subunit bridging via zinc ions enhances stability, which is crucial as there is no protein turn over in the lens. Can also form homodimers and homotetramers (dimers of dimers) which serve as the building blocks of homooligomers.

It localises to the cytoplasm. It is found in the nucleus. Functionally, contributes to the transparency and refractive index of the lens. May act as a chaperone, preventing aggregation of various proteins under a wide range of stress conditions. The chain is Alpha-crystallin A chain (cryaa) from Squalus acanthias (Spiny dogfish).